Consider the following 347-residue polypeptide: NADH-ubiquinone oxidoreductase chain 2 (347 aa).

9 consecutive transmembrane segments (helical) span residues 3–23, 25–45, 67–87, 150–170, 178–198, 201–221, 237–257, 274–294, and 323–343; these read PPIL…VLMS, HWLM…PILM, SMLL…WAVL, NPHL…WGGL, ILAY…TYSP, MLLN…LFMF, LPLI…LPPL, NMII…YFYM, and MTML…TPMM.

Belongs to the complex I subunit 2 family. Core subunit of respiratory chain NADH dehydrogenase (Complex I) which is composed of 45 different subunits. Interacts with TMEM242.

The protein localises to the mitochondrion inner membrane. It catalyses the reaction a ubiquinone + NADH + 5 H(+)(in) = a ubiquinol + NAD(+) + 4 H(+)(out). Core subunit of the mitochondrial membrane respiratory chain NADH dehydrogenase (Complex I) which catalyzes electron transfer from NADH through the respiratory chain, using ubiquinone as an electron acceptor. Essential for the catalytic activity and assembly of complex I. The polypeptide is NADH-ubiquinone oxidoreductase chain 2 (Mustela kathiah (Yellow-bellied weasel)).